Consider the following 287-residue polypeptide: 33 kDa chaperonin (287 aa).

Intrachain disulfides connect Cys233–Cys235 and Cys266–Cys269.

The protein belongs to the HSP33 family. In terms of processing, under oxidizing conditions two disulfide bonds are formed involving the reactive cysteines. Under reducing conditions zinc is bound to the reactive cysteines and the protein is inactive.

The protein resides in the cytoplasm. Its function is as follows. Redox regulated molecular chaperone. Protects both thermally unfolding and oxidatively damaged proteins from irreversible aggregation. Plays an important role in the bacterial defense system toward oxidative stress. The chain is 33 kDa chaperonin from Thermodesulfovibrio yellowstonii (strain ATCC 51303 / DSM 11347 / YP87).